A 670-amino-acid chain; its full sequence is Probable potassium transport system protein Kup (670 aa).

The interval 1–42 (MSQIPSPNDPPPAGAVPTSGAPAGPSATPAPSPTAGFSLPEH) is disordered. Over residues 15 to 35 (AVPTSGAPAGPSATPAPSPTA) the composition is skewed to low complexity. The next 12 helical transmembrane spans lie at 51–71 (LAAL…TSPL), 91–111 (VLGV…FKYM), 144–164 (VLLM…IITP), 180–200 (PAME…LFLF), 208–228 (VGAV…VLGV), 254–274 (GWHG…GEAL), 290–310 (WLGL…ALLL), 322–342 (LLAP…AAIV), 380–400 (IYLP…VLGF), 406–426 (LASA…LLFH), 440–460 (AWPL…ANVV), and 464–484 (DGGW…STWK).

It belongs to the HAK/KUP transporter (TC 2.A.72) family.

The protein resides in the cell inner membrane. It catalyses the reaction K(+)(in) + H(+)(in) = K(+)(out) + H(+)(out). Transport of potassium into the cell. Likely operates as a K(+):H(+) symporter. The sequence is that of Probable potassium transport system protein Kup from Anaeromyxobacter dehalogenans (strain 2CP-C).